Consider the following 373-residue polypeptide: Cobalt-precorrin-5B C(1)-methyltransferase (373 aa).

Belongs to the CbiD family.

It carries out the reaction Co-precorrin-5B + S-adenosyl-L-methionine = Co-precorrin-6A + S-adenosyl-L-homocysteine. Its pathway is cofactor biosynthesis; adenosylcobalamin biosynthesis; cob(II)yrinate a,c-diamide from sirohydrochlorin (anaerobic route): step 6/10. Its function is as follows. Catalyzes the methylation of C-1 in cobalt-precorrin-5B to form cobalt-precorrin-6A. The chain is Cobalt-precorrin-5B C(1)-methyltransferase from Listeria monocytogenes serotype 4b (strain CLIP80459).